A 180-amino-acid polypeptide reads, in one-letter code: Large ribosomal subunit protein bL17 (180 aa).

A disordered region spans residues 134–180; that stretch reads AQAKAKKAAAMPTEESEAKPAEEGDVVGASEPDAKAPEEPPTEAPEN.

This sequence belongs to the bacterial ribosomal protein bL17 family. Part of the 50S ribosomal subunit. Contacts protein L32.

The polypeptide is Large ribosomal subunit protein bL17 (Mycobacterium tuberculosis (strain CDC 1551 / Oshkosh)).